The chain runs to 261 residues: Cytochrome c oxidase subunit 3 (261 aa).

Residues 1 to 15 (MTHQTHAYHMVNPSP) are Mitochondrial matrix-facing. A helical transmembrane segment spans residues 16-34 (WPLTGALSALLMTSGLIMW). The Mitochondrial intermembrane portion of the chain corresponds to 35-40 (FHFNST). The helical transmembrane segment at 41-66 (TLLMLGLTTNMLTMYQWWRDVVREST) threads the bilayer. Over 67-72 (FQGHHT) the chain is Mitochondrial matrix. A helical membrane pass occupies residues 73 to 105 (PNVQKGLRYGMILFIISEVLFFTGFFWAFYHSS). Residues 106–128 (LAPTPELGGCWPPTGIHPLNPLE) lie on the Mitochondrial intermembrane side of the membrane. Residues 129 to 152 (VPLLNTSVLLASGVSITWAHHSLM) form a helical membrane-spanning segment. The Mitochondrial matrix segment spans residues 153–155 (EGN). A helical membrane pass occupies residues 156–183 (RNHMLQALFITIALGVYFTLLQASEYYE). Topologically, residues 184–190 (APFTISD) are mitochondrial intermembrane. Residues 191 to 223 (GVYGSTFFVATGFHGLHVIIGSTFLIVCFFRQL) form a helical membrane-spanning segment. The Mitochondrial matrix segment spans residues 224–232 (KFHFTSSHH). A helical membrane pass occupies residues 233-256 (FGFEAAAWYWHFVDVVWLFLYVSI). At 257-261 (YWWGS) the chain is on the mitochondrial intermembrane side.

The protein belongs to the cytochrome c oxidase subunit 3 family. As to quaternary structure, component of the cytochrome c oxidase (complex IV, CIV), a multisubunit enzyme composed of 14 subunits. The complex is composed of a catalytic core of 3 subunits MT-CO1, MT-CO2 and MT-CO3, encoded in the mitochondrial DNA, and 11 supernumerary subunits COX4I, COX5A, COX5B, COX6A, COX6B, COX6C, COX7A, COX7B, COX7C, COX8 and NDUFA4, which are encoded in the nuclear genome. The complex exists as a monomer or a dimer and forms supercomplexes (SCs) in the inner mitochondrial membrane with NADH-ubiquinone oxidoreductase (complex I, CI) and ubiquinol-cytochrome c oxidoreductase (cytochrome b-c1 complex, complex III, CIII), resulting in different assemblies (supercomplex SCI(1)III(2)IV(1) and megacomplex MCI(2)III(2)IV(2)).

The protein localises to the mitochondrion inner membrane. The enzyme catalyses 4 Fe(II)-[cytochrome c] + O2 + 8 H(+)(in) = 4 Fe(III)-[cytochrome c] + 2 H2O + 4 H(+)(out). In terms of biological role, component of the cytochrome c oxidase, the last enzyme in the mitochondrial electron transport chain which drives oxidative phosphorylation. The respiratory chain contains 3 multisubunit complexes succinate dehydrogenase (complex II, CII), ubiquinol-cytochrome c oxidoreductase (cytochrome b-c1 complex, complex III, CIII) and cytochrome c oxidase (complex IV, CIV), that cooperate to transfer electrons derived from NADH and succinate to molecular oxygen, creating an electrochemical gradient over the inner membrane that drives transmembrane transport and the ATP synthase. Cytochrome c oxidase is the component of the respiratory chain that catalyzes the reduction of oxygen to water. Electrons originating from reduced cytochrome c in the intermembrane space (IMS) are transferred via the dinuclear copper A center (CU(A)) of subunit 2 and heme A of subunit 1 to the active site in subunit 1, a binuclear center (BNC) formed by heme A3 and copper B (CU(B)). The BNC reduces molecular oxygen to 2 water molecules using 4 electrons from cytochrome c in the IMS and 4 protons from the mitochondrial matrix. The protein is Cytochrome c oxidase subunit 3 (MT-CO3) of Gazella spekei (Speke's gazelle).